A 519-amino-acid chain; its full sequence is Probable WRKY transcription factor 33 (519 aa).

Disordered regions lie at residues Met-1–Ser-34 and Ser-123–Pro-212. Residues Thr-7–Ser-34 show a composition bias toward polar residues. Residues Thr-130–Thr-142 show a composition bias toward low complexity. Positions Thr-164 to Ser-174 are enriched in polar residues. The segment covering Arg-178–Asn-188 has biased composition (basic and acidic residues). Residues Arg-178 to Pro-242 constitute a DNA-binding region (WRKY 1). 4 residues coordinate Zn(2+): Cys-209, Cys-214, His-237, and His-239. Disordered stretches follow at residues Val-232–Phe-255 and Asn-267–Arg-349. Residues Thr-245–Thr-254 are compositionally biased toward low complexity. Positions Gln-269–Ser-299 are enriched in polar residues. Positions Pro-323 to Asn-332 are enriched in basic and acidic residues. Positions Ser-356–Pro-421 form a DNA-binding region, WRKY 2. Cys-387, Cys-392, His-416, and His-418 together coordinate Zn(2+).

The protein belongs to the WRKY group I family. In terms of assembly, interacts with MKS1. Interacts with ATG18A. Interacts with SIB1 and SIB2. Interacts with VQ1 and VQ10. Post-translationally, phosphorylated by MPK4. Phosphorylated on serine residues by MPK3 and MPK6 following infection with the necrotrophic fungal pathogen B.cinerea. Highly expressed in roots, leaves and flowers, and at lower levels in stems, siliques and seeds.

It localises to the nucleus. Transcription factor. Interacts specifically with the W box (5'-TTGAC[CT]-3'), a frequently occurring elicitor-responsive cis-acting element. Involved in defense responses. Required for resistance to the necrotrophic fungal pathogen B.cinerea. Regulates the antagonistic relationship between defense pathways mediating responses to the bacterial pathogen P. syringae and the necrotrophic pathogen B.cinerea. Required for the phytoalexin camalexin synthesis following infection with B.cinerea. Acts as a positive regulator of the camalexin biosynthetic genes PAD3 (CYP71B15) and CYP71A13 by binding to their promoters. Acts downstream of MPK3 and MPK6 in reprogramming the expression of camalexin biosynthetic genes, which drives the metabolic flow to camalexin production. Functions with WRKY25 as positive regulator of salt stress response and abscisic acid (ABA) signaling. Functions with WRKY25 and WRKY26 as positive regulator of plant thermotolerance by partially participating in ethylene-response signal transduction pathway. The DNA-binding activity of WRKY33 is increased by SIB1 and SIB2. The chain is Probable WRKY transcription factor 33 (WRKY33) from Arabidopsis thaliana (Mouse-ear cress).